The following is a 262-amino-acid chain: Hydroxyethylthiazole kinase (262 aa).

Met-50 provides a ligand contact to substrate. Residues Arg-125 and Thr-171 each contribute to the ATP site. Residue Gly-198 coordinates substrate.

It belongs to the Thz kinase family. The cofactor is Mg(2+).

It catalyses the reaction 5-(2-hydroxyethyl)-4-methylthiazole + ATP = 4-methyl-5-(2-phosphooxyethyl)-thiazole + ADP + H(+). It participates in cofactor biosynthesis; thiamine diphosphate biosynthesis; 4-methyl-5-(2-phosphoethyl)-thiazole from 5-(2-hydroxyethyl)-4-methylthiazole: step 1/1. Its function is as follows. Catalyzes the phosphorylation of the hydroxyl group of 4-methyl-5-beta-hydroxyethylthiazole (THZ). The sequence is that of Hydroxyethylthiazole kinase from Escherichia coli O7:K1 (strain IAI39 / ExPEC).